A 441-amino-acid chain; its full sequence is Proline--tRNA ligase (441 aa).

The protein belongs to the class-II aminoacyl-tRNA synthetase family. ProS type 2 subfamily. Homodimer.

It localises to the cytoplasm. The catalysed reaction is tRNA(Pro) + L-proline + ATP = L-prolyl-tRNA(Pro) + AMP + diphosphate. In terms of biological role, catalyzes the attachment of proline to tRNA(Pro) in a two-step reaction: proline is first activated by ATP to form Pro-AMP and then transferred to the acceptor end of tRNA(Pro). The sequence is that of Proline--tRNA ligase from Bartonella quintana (strain Toulouse) (Rochalimaea quintana).